Consider the following 333-residue polypeptide: UDP-3-O-acylglucosamine N-acyltransferase (333 aa).

Catalysis depends on His225, which acts as the Proton acceptor.

This sequence belongs to the transferase hexapeptide repeat family. LpxD subfamily. In terms of assembly, homotrimer.

It carries out the reaction a UDP-3-O-[(3R)-3-hydroxyacyl]-alpha-D-glucosamine + a (3R)-hydroxyacyl-[ACP] = a UDP-2-N,3-O-bis[(3R)-3-hydroxyacyl]-alpha-D-glucosamine + holo-[ACP] + H(+). The protein operates within bacterial outer membrane biogenesis; LPS lipid A biosynthesis. In terms of biological role, catalyzes the N-acylation of UDP-3-O-acylglucosamine using 3-hydroxyacyl-ACP as the acyl donor. Is involved in the biosynthesis of lipid A, a phosphorylated glycolipid that anchors the lipopolysaccharide to the outer membrane of the cell. This chain is UDP-3-O-acylglucosamine N-acyltransferase, found in Paracidovorax citrulli (strain AAC00-1) (Acidovorax citrulli).